Consider the following 305-residue polypeptide: Olfactory receptor 4B13 (305 aa).

Over 1–25 (MANKNNVTELIFTGLFQDPEVQKVC) the chain is Extracellular. The N-linked (GlcNAc...) asparagine glycan is linked to Asn-6. Residues 26–46 (FVLFLPVYLATLLGNSLILVA) traverse the membrane as a helical segment. Topologically, residues 47-55 (VSISKTLHS) are cytoplasmic. A helical membrane pass occupies residues 56 to 76 (PMYFFLSSLSLVEICYSSTIV). At 77–95 (PKFITDLLAKVKTISLKGC) the chain is on the extracellular side. A disulfide bridge links Cys-95 with Cys-187. Residues 96 to 116 (LTQIFFSHFFGVVEVILLVVM) form a helical membrane-spanning segment. Topologically, residues 117–141 (AYDRYVAICKPLHYMNIMSRQVCHM) are cytoplasmic. Residues 142–162 (LVAGSWLGGFIHSIIQIIITI) form a helical membrane-spanning segment. The Extracellular segment spans residues 163-202 (PLPFCGPNVIDHYFCDLQQLFKLACTDTFMEGFIVMANSG). A helical transmembrane segment spans residues 203 to 223 (LISIVSLFILVSSYAVILISL). Residues 224–236 (RKRSAEGRRKALS) are Cytoplasmic-facing. A helical transmembrane segment spans residues 237–257 (TCASHITVVILFFVPGAFIYM). Residues 258–266 (RPSSTFTED) lie on the Extracellular side of the membrane. Residues 267–287 (KLVSVFYTVITPMLNPIVYTL) form a helical membrane-spanning segment. Over 288 to 305 (RNTEMKNAIRMSWKQKDS) the chain is Cytoplasmic.

It belongs to the G-protein coupled receptor 1 family.

It localises to the cell membrane. In terms of biological role, odorant receptor. The chain is Olfactory receptor 4B13 from Mus musculus (Mouse).